Here is a 631-residue protein sequence, read N- to C-terminus: Phosphomethylpyrimidine synthase (631 aa).

Substrate is bound by residues Asn231, Met260, Tyr289, His325, 345 to 347 (SRG), 386 to 389 (DGLR), and Glu425. His429 is a binding site for Zn(2+). Tyr452 lines the substrate pocket. His493 is a binding site for Zn(2+). [4Fe-4S] cluster is bound by residues Cys573, Cys576, and Cys581.

Belongs to the ThiC family. In terms of assembly, homodimer. Requires [4Fe-4S] cluster as cofactor.

It carries out the reaction 5-amino-1-(5-phospho-beta-D-ribosyl)imidazole + S-adenosyl-L-methionine = 4-amino-2-methyl-5-(phosphooxymethyl)pyrimidine + CO + 5'-deoxyadenosine + formate + L-methionine + 3 H(+). The protein operates within cofactor biosynthesis; thiamine diphosphate biosynthesis. Catalyzes the synthesis of the hydroxymethylpyrimidine phosphate (HMP-P) moiety of thiamine from aminoimidazole ribotide (AIR) in a radical S-adenosyl-L-methionine (SAM)-dependent reaction. This chain is Phosphomethylpyrimidine synthase, found in Acinetobacter baylyi (strain ATCC 33305 / BD413 / ADP1).